The chain runs to 364 residues: SVP1-like protein 2 (364 aa).

WD repeat units lie at residues 173–213 and 218–257; these read AHDS…KICE and YQHTAVCQLAFSPDELLLACASKKETLHIFSLHGSPNTIR.

Belongs to the WD repeat PROPPIN family.

The protein resides in the vacuole membrane. It is found in the cytoplasmic vesicle membrane. The protein localises to the preautophagosomal structure membrane. In terms of biological role, involved in mitochondrial or peroxisomal functions and amino acid signaling pathways. This chain is SVP1-like protein 2 (hsv2), found in Schizosaccharomyces pombe (strain 972 / ATCC 24843) (Fission yeast).